Here is a 638-residue protein sequence, read N- to C-terminus: Autolysin (638 aa).

Positions methionine 1–alanine 28 are cleaved as a signal peptide. The propeptide at glutamine 29 to lysine 183 is activation peptide. N-linked (GlcNAc...) asparagine glycosylation is present at asparagine 30. A Cysteine switch motif is present at residues proline 95–alanine 102. Residue cysteine 97 coordinates Zn(2+). N-linked (GlcNAc...) asparagine glycosylation occurs at asparagine 126. A disordered region spans residues valine 269 to leucine 292. Positions threonine 270 to arginine 284 are enriched in pro residues. Residue asparagine 296 is glycosylated (N-linked (GlcNAc...) asparagine). Residue histidine 396 coordinates Zn(2+). Glutamate 397 is an active-site residue. Residues histidine 400 and histidine 406 each contribute to the Zn(2+) site. 4 N-linked (GlcNAc...) asparagine glycosylation sites follow: asparagine 458, asparagine 465, asparagine 470, and asparagine 523.

This sequence belongs to the peptidase M11 family. Zn(2+) is required as a cofactor. Present in 2 forms: an inactive V-form in vegetative cells and an active and soluble G-form. The V-form enzyme may be converted to the G-form enzyme during gametic differentiation under nitrogen-starved conditions.

It localises to the periplasm. It is found in the secreted. Its subcellular location is the cell wall. It catalyses the reaction Cleavage of the proline- and hydroxyproline-rich proteins of the Chlamydomonas cell wall. Also cleaves azocasein, gelatin and Leu-Trp-Met-|-Arg-Phe-Ala.. Mediates digestion of the cell walls of the 2 mating type gametes during mating as a necessary prelude to cell fusion. This enzyme acts specifically on the framework proteins (inner wall) of the cell wall, cleaving several model peptides at specific sites. The sequence is that of Autolysin from Chlamydomonas reinhardtii (Chlamydomonas smithii).